We begin with the raw amino-acid sequence, 261 residues long: Probable pectin methylesterase CGR2 (261 aa).

Residues 1–35 are Cytoplasmic-facing; the sequence is MARRQVGSTRRVGDGGSFPFAGALHSKSRSSPLLS. Residues 36–56 form a helical membrane-spanning segment; that stretch reads ICLVLVGACLLIGYAYSGPGI. Over 57–261 the chain is Lumenal; it reads FKSIKEVSKV…CQVFHLKPLH (205 aa). Asn-174 carries N-linked (GlcNAc...) asparagine glycosylation.

Belongs to the class I-like SAM-binding methyltransferase superfamily.

Its subcellular location is the golgi apparatus membrane. Together with CGR3, required for homogalacturonan pectins (HG) methylesterification in the Golgi apparatus prior to integration into cell walls, essential for general growth and development. Promotes rosette growth. Impacts carbon (C) partitioning, photosynthesis and respiration efficiency by influencing leaf mesophyll cell walls morphology and physiology; pectin methylesterification modulates both expansion and positioning of cells in leaves, probably by changing cell walls plasticity. The chain is Probable pectin methylesterase CGR2 from Arabidopsis thaliana (Mouse-ear cress).